Reading from the N-terminus, the 322-residue chain is Fructose-1,6-bisphosphatase class 1 (322 aa).

Residues glutamate 84, aspartate 103, leucine 105, and aspartate 106 each coordinate Mg(2+). Substrate-binding positions include 106 to 109 (DGSS), asparagine 198, and lysine 264. Residue glutamate 270 coordinates Mg(2+).

This sequence belongs to the FBPase class 1 family. Homotetramer. It depends on Mg(2+) as a cofactor.

The protein localises to the cytoplasm. The catalysed reaction is beta-D-fructose 1,6-bisphosphate + H2O = beta-D-fructose 6-phosphate + phosphate. It participates in carbohydrate biosynthesis; gluconeogenesis. The sequence is that of Fructose-1,6-bisphosphatase class 1 from Colwellia psychrerythraea (strain 34H / ATCC BAA-681) (Vibrio psychroerythus).